Consider the following 308-residue polypeptide: Homogentisate phytyltransferase (308 aa).

8 helical membrane passes run 13 to 33 (PHTIIGTTLSVWAVYLLTILG), 44 to 64 (LDLVFGAWLACLLGNVYIVGL), 104 to 124 (LAIAWGLGLWLGLTVGISLII), 142 to 162 (AALCILTVRGIVVNLGLFLFF), 173 to 193 (ITPIWVLTLFILVFTVAIAIF), 219 to 241 (VFRGTLILLTGCYLAMAIWGLWA), 245 to 263 (LNTAFLIVSHLCLLALLWW), and 279 to 299 (FYQFIWKLFFLEYLLYPLALW).

The protein belongs to the UbiA prenyltransferase family.

It is found in the membrane. It carries out the reaction phytyl diphosphate + homogentisate + H(+) = 2-methyl-6-phytyl-1,4-benzene-1,4-diol + CO2 + diphosphate. Its pathway is cofactor biosynthesis; tocopherol biosynthesis. In terms of biological role, involved in the synthesis of tocopherol (vitamin E). Catalyzes the condensation of homogentisate and phytyl diphosphate to form dimethylphytylhydrquinone. This Synechocystis sp. (strain ATCC 27184 / PCC 6803 / Kazusa) protein is Homogentisate phytyltransferase.